Consider the following 408-residue polypeptide: Voltage-gated potassium channel subunit beta-1 (408 aa).

Positions 97, 98, 104, and 126 each coordinate NADP(+). The active-site Proton donor/acceptor is the Tyr131. The NADP(+) site is built by Asn199, Ser229, Arg230, Gln255, Trp284, Ser285, Pro286, Leu287, Ala288, Cys289, Lys295, Arg305, Gly364, Ser366, Gln370, Glu373, and Asn374.

Belongs to the shaker potassium channel beta subunit family. In terms of assembly, homotetramer. Interaction with tetrameric potassium channel alpha subunits gives rise to a heterooctamer. Identified in potassium channel complexes containing KCNA1, KCNA2, KCNA4, KCNA5, KCNA6, KCNAB1 and KCNAB2. Part of a complex containing KCNA1, KCNA4 and LGI1; interaction with LGI1 inhibits down-regulation of KCNA1 channel activity. Interacts with the dimer formed by GNB1 and GNG2; this enhances KCNA1 binding. Interacts with SQSTM1. In terms of tissue distribution, expression most abundant in aorta. Also high in left ventricle. Also detected in right ventricle, atrium, brain, skeletal muscle and kidney. Not detected in liver.

It localises to the cytoplasm. It is found in the membrane. The protein localises to the cell membrane. It carries out the reaction a primary alcohol + NADP(+) = an aldehyde + NADPH + H(+). It catalyses the reaction a secondary alcohol + NADP(+) = a ketone + NADPH + H(+). Regulatory subunit of the voltage-gated potassium (Kv) Shaker channels composed of pore-forming and potassium-conducting alpha subunits and of regulatory beta subunits. The beta-1/KCNAB1 cytoplasmic subunit mediates closure of delayed rectifier potassium channels by physically obstructing the pore via its N-terminal domain and increases the speed of channel closure for other family members. Promotes the inactivation of Kv1.1/KCNA1, Kv1.2/KCNA2, Kv1.4/KCNA4, Kv1.5/KCNA5 and Kv1.6/KCNA6 alpha subunit-containing channels. Displays nicotinamide adenine dinucleotide phosphate (NADPH)-dependent aldoketoreductase activity by catalyzing the NADPH-dependent reduction of a variety of endogenous aldehydes and ketones. The binding of NADPH is required for efficient down-regulation of potassium channel activity. Oxidation of the bound NADPH restrains N-terminal domain from blocking the channel, thereby decreasing N-type inactivation of potassium channel activity. This Mustela putorius (European polecat) protein is Voltage-gated potassium channel subunit beta-1 (KCNAB1).